The chain runs to 489 residues: uncharacterized protein (489 aa).

Thr-26 carries the phosphothreonine modification. A Phosphoserine modification is found at Ser-27. Transmembrane regions (helical) follow at residues 63-83 (IVYL…IEFA), 182-202 (LVWS…ILCA), and 221-241 (VFKL…IAFL). 3 disordered regions span residues 260-312 (PKTS…APLE), 401-435 (STLL…VPPS), and 450-489 (PSIN…PVVH). The residue at position 263 (Ser-263) is a Phosphoserine. Residues 268-282 (QRGTSSSQPSENDAN) are compositionally biased toward polar residues. Residues 450 to 465 (PSINNVGGSTAPSVNN) show a composition bias toward polar residues. Low complexity predominate over residues 477–489 (SRSSTLTERPVVH).

Its subcellular location is the endoplasmic reticulum membrane. This is an uncharacterized protein from Schizosaccharomyces pombe (strain 972 / ATCC 24843) (Fission yeast).